The primary structure comprises 69 residues: Cytochrome c oxidase subunit 8A, mitochondrial (69 aa).

The N-terminal 25 residues, 1-25 (MSVLTSLLLRGLTGSARWLPVPRAK), are a transit peptide targeting the mitochondrion. The short motif at 2–19 (SVLTSLLLRGLTGSARWL) is the SIFI-degron element. The Mitochondrial matrix portion of the chain corresponds to 26–36 (VHSMPPEVELG). A helical membrane pass occupies residues 37-60 (IMEKAIGLTSCFVSLFLPAGWILS). The Mitochondrial intermembrane portion of the chain corresponds to 61–69 (HLEDYKRPE).

It belongs to the cytochrome c oxidase VIII family. As to quaternary structure, component of the cytochrome c oxidase (complex IV, CIV), a multisubunit enzyme composed of 14 subunits. The complex is composed of a catalytic core of 3 subunits MT-CO1, MT-CO2 and MT-CO3, encoded in the mitochondrial DNA, and 11 supernumerary subunits COX4I, COX5A, COX5B, COX6A, COX6B, COX6C, COX7A, COX7B, COX7C, COX8 and NDUFA4, which are encoded in the nuclear genome. The complex exists as a monomer or a dimer and forms supercomplexes (SCs) in the inner mitochondrial membrane with NADH-ubiquinone oxidoreductase (complex I, CI) and ubiquinol-cytochrome c oxidoreductase (cytochrome b-c1 complex, complex III, CIII), resulting in different assemblies (supercomplex SCI(1)III(2)IV(1) and megacomplex MCI(2)III(2)IV(2)). In response to mitochondrial stress, the precursor protein is ubiquitinated by the SIFI complex in the cytoplasm before mitochondrial import, leading to its degradation. Within the SIFI complex, UBR4 initiates ubiquitin chain that are further elongated or branched by KCMF1.

The protein localises to the mitochondrion inner membrane. The protein operates within energy metabolism; oxidative phosphorylation. Functionally, component of the cytochrome c oxidase, the last enzyme in the mitochondrial electron transport chain which drives oxidative phosphorylation. The respiratory chain contains 3 multisubunit complexes succinate dehydrogenase (complex II, CII), ubiquinol-cytochrome c oxidoreductase (cytochrome b-c1 complex, complex III, CIII) and cytochrome c oxidase (complex IV, CIV), that cooperate to transfer electrons derived from NADH and succinate to molecular oxygen, creating an electrochemical gradient over the inner membrane that drives transmembrane transport and the ATP synthase. Cytochrome c oxidase is the component of the respiratory chain that catalyzes the reduction of oxygen to water. Electrons originating from reduced cytochrome c in the intermembrane space (IMS) are transferred via the dinuclear copper A center (CU(A)) of subunit 2 and heme A of subunit 1 to the active site in subunit 1, a binuclear center (BNC) formed by heme A3 and copper B (CU(B)). The BNC reduces molecular oxygen to 2 water molecules using 4 electrons from cytochrome c in the IMS and 4 protons from the mitochondrial matrix. This chain is Cytochrome c oxidase subunit 8A, mitochondrial (COX8A), found in Macaca silenus (Lion-tailed macaque).